The following is a 272-amino-acid chain: Regulatory protein RecX (272 aa).

Belongs to the RecX family.

The protein localises to the cytoplasm. In terms of biological role, modulates RecA activity. The protein is Regulatory protein RecX of Oceanobacillus iheyensis (strain DSM 14371 / CIP 107618 / JCM 11309 / KCTC 3954 / HTE831).